A 519-amino-acid chain; its full sequence is Cytochrome P450 52A13 (519 aa).

Residue Cys466 participates in heme binding.

Belongs to the cytochrome P450 family. It depends on heme as a cofactor.

The protein localises to the membrane. In terms of biological role, together with an NADPH cytochrome P450 the enzyme system catalyzes the terminal hydroxylation as the first step in the assimilation of alkanes and fatty acids. The sequence is that of Cytochrome P450 52A13 (CYP52A13) from Debaryomyces hansenii (Yeast).